Here is a 630-residue protein sequence, read N- to C-terminus: tRNA uridine 5-carboxymethylaminomethyl modification enzyme MnmG (630 aa).

13–18 (GGGHAG) contacts FAD. 273-287 (GPRYCPSIEDKVMRF) contributes to the NAD(+) binding site.

This sequence belongs to the MnmG family. In terms of assembly, homodimer. Heterotetramer of two MnmE and two MnmG subunits. FAD is required as a cofactor.

It localises to the cytoplasm. Its function is as follows. NAD-binding protein involved in the addition of a carboxymethylaminomethyl (cmnm) group at the wobble position (U34) of certain tRNAs, forming tRNA-cmnm(5)s(2)U34. This chain is tRNA uridine 5-carboxymethylaminomethyl modification enzyme MnmG, found in Actinobacillus pleuropneumoniae serotype 7 (strain AP76).